Reading from the N-terminus, the 237-residue chain is Sugar fermentation stimulation protein homolog (237 aa).

The protein belongs to the SfsA family.

This is Sugar fermentation stimulation protein homolog from Colwellia psychrerythraea (strain 34H / ATCC BAA-681) (Vibrio psychroerythus).